The chain runs to 504 residues: Amyloid-beta A4 precursor protein-binding family B member 3 (504 aa).

In terms of domain architecture, WW spans 29–61 (TGLPPGWRKIRDAAGTYYWHVPSGSTQWQRPTW). PID domains are found at residues 111–278 (EPGA…QVEL) and 283–438 (SQAA…RTSS).

As to quaternary structure, interacts with APP (via intracellular domain). Interacts with APLP1 and APLP2 (via intracellular domain). Expressed predominantly in brain and testis.

The protein localises to the cytoplasm. It localises to the nucleus. May modulate the internalization of amyloid-beta precursor protein. This is Amyloid-beta A4 precursor protein-binding family B member 3 from Rattus norvegicus (Rat).